A 688-amino-acid chain; its full sequence is Potassium-transporting ATPase ATP-binding subunit (688 aa).

The next 4 membrane-spanning stretches (helical) occupy residues 35 to 55 (VMMV…VQFA), 62 to 82 (AVFS…ANLA), 219 to 239 (IALS…VVTL), and 260 to 280 (VLVA…LSAI). Residue aspartate 313 is the 4-aspartylphosphate intermediate of the active site. Residues aspartate 350, glutamate 354, 383–390 (FSAQTRMS), and lysine 401 contribute to the ATP site. Residues aspartate 524 and aspartate 528 each coordinate Mg(2+). The next 3 membrane-spanning stretches (helical) occupy residues 594 to 614 (FAIL…LNLM), 622 to 642 (AILS…PLAL), and 668 to 688 (VVLP…MGWI).

Belongs to the cation transport ATPase (P-type) (TC 3.A.3) family. Type IA subfamily. As to quaternary structure, the system is composed of three essential subunits: KdpA, KdpB and KdpC.

Its subcellular location is the cell inner membrane. The enzyme catalyses K(+)(out) + ATP + H2O = K(+)(in) + ADP + phosphate + H(+). Functionally, part of the high-affinity ATP-driven potassium transport (or Kdp) system, which catalyzes the hydrolysis of ATP coupled with the electrogenic transport of potassium into the cytoplasm. This subunit is responsible for energy coupling to the transport system and for the release of the potassium ions to the cytoplasm. In Tolumonas auensis (strain DSM 9187 / NBRC 110442 / TA 4), this protein is Potassium-transporting ATPase ATP-binding subunit.